The following is a 1690-amino-acid chain: Lysine-specific demethylase 5A (1690 aa).

One can recognise a JmjN domain in the interval 19-60 (CPVFEPSWEEFTDPLSFIGRIRPLAEKTGICKIRPPKDWQPP). In terms of domain architecture, ARID spans 84-174 (TRVRLDFLDQ…ILYPYELFQS (91 aa)). Residue lysine 191 forms a Glycyl lysine isopeptide (Lys-Gly) (interchain with G-Cter in SUMO2) linkage. The residue at position 204 (serine 204) is a Phosphoserine. The segment at 293 to 343 (LYVCMFCGRGNNEDKLLLCDGCDDSYHTFCLIPPLPDVPKGDWRCPKCVAE) adopts a PHD-type 1 zinc-finger fold. Tyrosine 409 contacts 2-oxoglutarate. The GSGFP motif motif lies at 419 to 423 (GSGFP). Residues 437–603 (EYALSGWNLN…IGRQCVNHYR (167 aa)) enclose the JmjC domain. The Fe cation site is built by histidine 483 and glutamate 485. The 2-oxoglutarate site is built by serine 491, asparagine 493, and lysine 501. Histidine 571 provides a ligand contact to Fe cation. A C5HC2 zinc finger spans residues 676 to 728 (CSACRTTCFLSALTCSCNPERLVCLYHPTDLCPCPMQKKCLRYRYPLEDLPSL). Lysine 1007 is covalently cross-linked (Glycyl lysine isopeptide (Lys-Gly) (interchain with G-Cter in SUMO2)). Serine 1111 carries the post-translational modification Phosphoserine. Residues 1161–1218 (VKFCICRKTASGFMLQCELCKDWFHNSCVPLPKSSSQKKGSSWQAKEVKFLCPLCMRS) form a PHD-type 2 zinc finger. Disordered regions lie at residues 1327-1348 (SVSS…SDED) and 1407-1433 (KSCS…LEPP). Phosphoserine is present on residues serine 1330 and serine 1331. The span at 1337-1348 (DYDDEETDSDED) shows a compositional bias: acidic residues. Threonine 1343 carries the phosphothreonine modification. Serine 1345 is modified (phosphoserine). Phosphoserine is present on residues serine 1438 and serine 1488. Basic and acidic residues-rich tracts occupy residues 1490 to 1503 (EEKP…DSSE) and 1520 to 1530 (GKQKSKELKKM). Disordered regions lie at residues 1490-1509 (EEKP…RKRK) and 1516-1543 (LFGE…LGAD). Phosphotyrosine is present on tyrosine 1595. Phosphoserine is present on residues serine 1598 and serine 1603. The PHD-type 3 zinc finger occupies 1607 to 1661 (NAVCAAQNCQRPCKDKVDWVQCDGGCDEWFHQVCVGVSPEMAENEDYICINCAKK). Residues 1623–1690 (VDWVQCDGGC…LPMEDLKETS (68 aa)) form an interaction with LMO2 region. At serine 1666 the chain carries Phosphoserine.

It belongs to the JARID1 histone demethylase family. Interacts with SUZ12; the interaction is direct. Interacts with the viral protein-binding domain of RB1. Interacts with ESR1, MYC, MYCN and LMO2. Interacts with HDAC1; this interaction impairs histone deacetylation by HDAC1. Interacts with BMAL1 and CLOCK. Interacts (via PHD-type 1 zinc finger) with histone H3 unmodified at 'Lys-4' and (via PHD-type 3 zinc finger) with histone H3 di- and trimethylated at 'Lys-4'. Fe(2+) serves as cofactor.

It is found in the nucleus. The protein localises to the nucleolus. The enzyme catalyses N(6),N(6),N(6)-trimethyl-L-lysyl(4)-[histone H3] + 3 2-oxoglutarate + 3 O2 = L-lysyl(4)-[histone H3] + 3 formaldehyde + 3 succinate + 3 CO2. The inhibitors KDOAM-25, CPI-455 and others inhibits its demethylase activity, resulting to cell growth arrest in cancer cells. Histone demethylase that specifically demethylates 'Lys-4' of histone H3, thereby playing a central role in histone code. Does not demethylate histone H3 'Lys-9', H3 'Lys-27', H3 'Lys-36', H3 'Lys-79' or H4 'Lys-20'. Demethylates trimethylated and dimethylated but not monomethylated H3 'Lys-4'. Regulates specific gene transcription through DNA-binding on 5'-CCGCCC-3' motif. May stimulate transcription mediated by nuclear receptors. Involved in transcriptional regulation of Hox proteins during cell differentiation. May participate in transcriptional repression of cytokines such as CXCL12. Plays a role in the regulation of the circadian rhythm and in maintaining the normal periodicity of the circadian clock. In a histone demethylase-independent manner, acts as a coactivator of the CLOCK-BMAL1-mediated transcriptional activation of PER1/2 and other clock-controlled genes and increases histone acetylation at PER1/2 promoters by inhibiting the activity of HDAC1. Seems to act as a transcriptional corepressor for some genes such as MT1F and to favor the proliferation of cancer cells. The sequence is that of Lysine-specific demethylase 5A from Homo sapiens (Human).